Consider the following 586-residue polypeptide: uncharacterized protein (586 aa).

This is an uncharacterized protein from Saccharomyces cerevisiae (strain ATCC 204508 / S288c) (Baker's yeast).